The following is a 388-amino-acid chain: UPF0229 protein BH1031 (388 aa).

The interval 80–117 (HVGQGDGDSQVGDVIARDPSAGQQGPGKGQGAGDQPGE) is disordered. Over residues 103 to 113 (QGPGKGQGAGD) the composition is skewed to gly residues.

Belongs to the UPF0229 family.

The protein is UPF0229 protein BH1031 of Halalkalibacterium halodurans (strain ATCC BAA-125 / DSM 18197 / FERM 7344 / JCM 9153 / C-125) (Bacillus halodurans).